Here is a 559-residue protein sequence, read N- to C-terminus: Probable alpha-(1-&gt;6)-mannopyranosyltransferase MSMEG_3120/MSMEI_3041 (559 aa).

12 helical membrane-spanning segments follow: residues 41–61 (FGAT…ARPV), 81–101 (VSLT…LMLG), 202–222 (IVEA…LIVW), 247–267 (LLFM…GLML), 300–316 (WQPM…IAMS), 321–340 (LPSL…RWGG), 355–375 (ISLA…GWLF), 386–406 (WMSP…LLGL), 419–439 (AIGV…VLRG), 455–475 (VLLF…PLAA), 480–500 (PGFR…GPTA), and 507–527 (LFQI…LIAL). Residues 535–548 (RPAPEPPARPPEQP) are compositionally biased toward pro residues. Residues 535 to 559 (RPAPEPPARPPEQPAPADDAYAESP) form a disordered region.

The protein belongs to the MptA/B family.

The protein localises to the membrane. Catalyzes the addition of alpha-(1-&gt;6)-mannose residue. This chain is Probable alpha-(1-&gt;6)-mannopyranosyltransferase MSMEG_3120/MSMEI_3041, found in Mycolicibacterium smegmatis (strain ATCC 700084 / mc(2)155) (Mycobacterium smegmatis).